The chain runs to 482 residues: Methylenetetrahydrofolate--tRNA-(uracil-5-)-methyltransferase TrmFO (482 aa).

11-16 (GGGLAG) contacts FAD. The tract at residues 450–482 (LRQPSPWSAEDSPRAALPIPEPTPLGPASGSSE) is disordered.

This sequence belongs to the MnmG family. TrmFO subfamily. FAD is required as a cofactor.

It localises to the cytoplasm. It carries out the reaction uridine(54) in tRNA + (6R)-5,10-methylene-5,6,7,8-tetrahydrofolate + NADH + H(+) = 5-methyluridine(54) in tRNA + (6S)-5,6,7,8-tetrahydrofolate + NAD(+). It catalyses the reaction uridine(54) in tRNA + (6R)-5,10-methylene-5,6,7,8-tetrahydrofolate + NADPH + H(+) = 5-methyluridine(54) in tRNA + (6S)-5,6,7,8-tetrahydrofolate + NADP(+). Its function is as follows. Catalyzes the folate-dependent formation of 5-methyl-uridine at position 54 (M-5-U54) in all tRNAs. This Rhodospirillum rubrum (strain ATCC 11170 / ATH 1.1.1 / DSM 467 / LMG 4362 / NCIMB 8255 / S1) protein is Methylenetetrahydrofolate--tRNA-(uracil-5-)-methyltransferase TrmFO.